The chain runs to 457 residues: BAG family molecular chaperone regulator 4 (457 aa).

The interval 1-101 is disordered; sequence MSALRRSGYG…QPPYPSYNSN (101 aa). Serine 7 bears the Phosphoserine mark. Low complexity predominate over residues 8–20; the sequence is GYGPSDGPSYGRY. Pro residues predominate over residues 30–47; that stretch reads VHPPPPLYPLRPEPPQPP. Omega-N-methylarginine is present on residues arginine 40, arginine 53, and arginine 108. Disordered stretches follow at residues 113–136, 166–333, and 347–377; these read YPST…NGAY, STEV…DDSD, and LYGN…ESTP. The span at 166–182 shows a compositional bias: polar residues; that stretch reads STEVPSTYRSSGNSPTP. The residue at position 185 (arginine 185) is an Omega-N-methylarginine. Low complexity-rich tracts occupy residues 274-284 and 294-308; these read STSPWPSSGSP and QPKD…SDQS. 2 stretches are compositionally biased toward polar residues: residues 320 to 333 and 347 to 365; these read QYES…DDSD and LYGN…SSSL. One can recognise a BAG domain in the interval 379–456; it reads SIKKIIHVLE…AILEKLEKKG (78 aa).

In terms of assembly, binds to the ATPase domain of HSP/HSC70 chaperones. Binds to the death domain of TNFRSF1A in the absence of TNF and thereby prevents binding of adapter molecules such as TRADD or TRAF2. Binds to the death domain of TNFRSF12. Interacts with PRKN. Ubiquitous.

The protein resides in the cytoplasm. In terms of biological role, inhibits the chaperone activity of HSP70/HSC70 by promoting substrate release. Prevents constitutive TNFRSF1A signaling. Negative regulator of PRKN translocation to damaged mitochondria. This chain is BAG family molecular chaperone regulator 4 (BAG4), found in Homo sapiens (Human).